Consider the following 387-residue polypeptide: S-adenosylmethionine synthase (387 aa).

H16 contacts ATP. D18 serves as a coordination point for Mg(2+). E44 is a binding site for K(+). L-methionine contacts are provided by E57 and Q100. The tract at residues 100–110 (QSPDIAQGVDR) is flexible loop. ATP is bound by residues 167-169 (DAK), 232-233 (RF), D241, 247-248 (RK), A264, and K268. Position 241 (D241) interacts with L-methionine. Residue K272 participates in L-methionine binding.

This sequence belongs to the AdoMet synthase family. Homotetramer; dimer of dimers. Requires Mg(2+) as cofactor. The cofactor is K(+).

It localises to the cytoplasm. It carries out the reaction L-methionine + ATP + H2O = S-adenosyl-L-methionine + phosphate + diphosphate. Its pathway is amino-acid biosynthesis; S-adenosyl-L-methionine biosynthesis; S-adenosyl-L-methionine from L-methionine: step 1/1. In terms of biological role, catalyzes the formation of S-adenosylmethionine (AdoMet) from methionine and ATP. The overall synthetic reaction is composed of two sequential steps, AdoMet formation and the subsequent tripolyphosphate hydrolysis which occurs prior to release of AdoMet from the enzyme. The protein is S-adenosylmethionine synthase of Cupriavidus pinatubonensis (strain JMP 134 / LMG 1197) (Cupriavidus necator (strain JMP 134)).